The sequence spans 222 residues: Charged multivesicular body protein 3 (222 aa).

Glycine 2 is lipidated: N-myristoyl glycine. The segment at glycine 2–alanine 113 is intramolecular interaction with C-terminus. The stretch at lysine 22 to lysine 54 forms a coiled coil. Important for autoinhibitory function stretches follow at residues valine 59–alanine 64 and isoleucine 168–leucine 169. Positions glutamate 149–serine 222 form a coiled coil. Positions methionine 151 to leucine 220 are intramolecular interaction with N-terminus. An interaction with VPS4A region spans residues methionine 151–serine 222. A Glycyl lysine isopeptide (Lys-Gly) (interchain with G-Cter in ubiquitin) cross-link involves residue lysine 179. The segment at alanine 180–serine 222 is disordered. Interaction with STAMBP stretches follow at residues alanine 196–serine 222, glutamate 203–glutamate 207, and arginine 221–serine 222. Serine 200 is modified (phosphoserine). Acidic residues predominate over residues serine 200–leucine 210. The short motif at aspartate 201–glutamate 211 is the MIT-interacting motif element.

It belongs to the SNF7 family. As to quaternary structure, probable core component of the endosomal sorting required for transport complex III (ESCRT-III). ESCRT-III components are thought to multimerize to form a flat lattice on the perimeter membrane of the endosome. Several assembly forms of ESCRT-III may exist that interact and act sequentially. Forms a metastable monomer in solution; its core structure (without part of the putative autoinhibitory C-terminal acidic region) oligomerizes into a flat lattice via two different dimerization interfaces. In vitro, heteromerizes with CHMP2A (but not CHMP4) to form helical tubular structures that expose membrane-interacting sites on the outside whereas VPS4B can associate on the inside of the tubule. May interact with IGFBP7; the relevance of such interaction however remains unclear. Interacts with CHMP2A. Interacts with CHMP4A; the interaction requires the release of CHMP4A autoinhibition. Interacts with VPS4A. Interacts with STAMBP; the interaction appears to relieve the autoinhibition of CHMP3. Interacts with VTA1.

It is found in the cytoplasm. Its subcellular location is the cytosol. It localises to the membrane. The protein localises to the endosome. The protein resides in the late endosome membrane. Its function is as follows. Probable core component of the endosomal sorting required for transport complex III (ESCRT-III) which is involved in multivesicular bodies (MVBs) formation and sorting of endosomal cargo proteins into MVBs. MVBs contain intraluminal vesicles (ILVs) that are generated by invagination and scission from the limiting membrane of the endosome and mostly are delivered to lysosomes enabling degradation of membrane proteins, such as stimulated growth factor receptors, lysosomal enzymes and lipids. The MVB pathway appears to require the sequential function of ESCRT-O, -I,-II and -III complexes. ESCRT-III proteins mostly dissociate from the invaginating membrane before the ILV is released. The ESCRT machinery also functions in topologically equivalent membrane fission events, such as the terminal stages of cytokinesis and the budding of enveloped viruses (lentiviruses). ESCRT-III proteins are believed to mediate the necessary vesicle extrusion and/or membrane fission activities, possibly in conjunction with the AAA ATPase VPS4. Selectively binds to phosphatidylinositol 3,5-bisphosphate PtdIns(3,5)P2 and PtdIns(3,4)P2 in preference to other phosphoinositides tested. Involved in late stages of cytokinesis. Plays a role in endosomal sorting/trafficking of EGF receptor. The chain is Charged multivesicular body protein 3 (CHMP3) from Macaca fascicularis (Crab-eating macaque).